The primary structure comprises 414 residues: COUP transcription factor 2 (414 aa).

The disordered stretch occupies residues 1–72; sequence MAMVVSTWRD…PGGPGSDKQQ (72 aa). Residues 27–37 show a composition bias toward pro residues; the sequence is PPVPGPPPGAP. The segment covering 38-57 has biased composition (low complexity); that stretch reads HTPQTPGQGGPASTPAQTAA. T51 carries the post-translational modification Phosphothreonine. The segment covering 58–67 has biased composition (gly residues); it reads GGQGGPGGPG. A DNA-binding region (nuclear receptor) is located at residues 76–151; the sequence is HIECVVCGDK…VGMRREAVQR (76 aa). 2 consecutive NR C4-type zinc fingers follow at residues 79 to 99 and 115 to 139; these read CVVCGDKSSGKHYGQFTCEGC and CRANRNCPIDQHHRNQCQYCRLKKC. The interval 117–414 is interaction with ZFPM2; that stretch reads ANRNCPIDQH…SFNWPYMAIQ (298 aa). The NR LBD domain maps to 177–403; sequence YLSGYISLLL…TLIRDMLLSG (227 aa). The segment at 337-414 is important for dimerization; the sequence is LQEKSQCALE…SFNWPYMAIQ (78 aa).

The protein belongs to the nuclear hormone receptor family. NR2 subfamily. As to quaternary structure, interacts with SQSTM1. Binds DNA as a dimer; homodimer or heterodimer with NR2F6. Interacts with NCOA1, NCOA2, NCOA3 and PPARGC1A. Interacts with ZFPM2.

Its subcellular location is the nucleus. Its function is as follows. Ligand-activated transcription factor. Activated by high concentrations of 9-cis-retinoic acid and all-trans-retinoic acid, but not by dexamethasone, cortisol or progesterone (in vitro). Regulation of the apolipoprotein A-I gene transcription. Binds to DNA site A. May be required to establish ovary identity during early gonad development. This chain is COUP transcription factor 2 (NR2F2), found in Bos taurus (Bovine).